The chain runs to 177 residues: Large ribosomal subunit protein uL6 (177 aa).

The protein belongs to the universal ribosomal protein uL6 family. In terms of assembly, part of the 50S ribosomal subunit.

This protein binds to the 23S rRNA, and is important in its secondary structure. It is located near the subunit interface in the base of the L7/L12 stalk, and near the tRNA binding site of the peptidyltransferase center. This chain is Large ribosomal subunit protein uL6, found in Idiomarina loihiensis (strain ATCC BAA-735 / DSM 15497 / L2-TR).